The chain runs to 73 residues: Putative antitoxin VapB38 (73 aa).

Functionally, probable antitoxin component of a type II toxin-antitoxin (TA) system. Its putative cognate toxin is VapC38. The protein is Putative antitoxin VapB38 (vapB38) of Mycobacterium tuberculosis (strain ATCC 25618 / H37Rv).